We begin with the raw amino-acid sequence, 239 residues long: MEKEKGNDDGIPDQENSLDFSEHFNQLELLETHGHLIPTGTQSLWVGNSDEDEEQDDKNEEWYRLQEKKMEKDPSRLLLWAAEKNRLTTVRRLLSEKATHVNTRDEDEYTPLHRAAYSGHLDIVQELIAQGADVHAVTVDGWTPLHSACKWNNTRVASFLLQHDADINAQTKGLLTPLHLAAGNRDSKDTLELLLMNRYVKPGLKNNLEETAFDIARRTSIYHYLFEIVEGCTNSSPQS.

Position 49 is a phosphoserine (S49). ANK repeat units lie at residues 73-103 (DPSR…HVNT), 107-136 (DEYT…DVHA), 140-169 (DGWT…DINA), and 173-206 (GLLT…GLKN).

In terms of tissue distribution, widely expressed in fetus, at a high level in fetal liver, brain and lung.

Its subcellular location is the nucleus. In terms of biological role, induces HBG1 expression. May have a role in spermatogenesis where it promotes autophagy in response to serum starvation, via the NF-kappaB pathway. The protein is Ankyrin repeat domain-containing protein 49 (ANKRD49) of Homo sapiens (Human).